Consider the following 178-residue polypeptide: PEST proteolytic signal-containing nuclear protein (178 aa).

Positions 1 to 15 (MADGKAGDEKPEKSQ) are enriched in basic and acidic residues. Positions 1–82 (MADGKAGDEK…FAIGSQTTKK (82 aa)) are disordered. Residue A2 is modified to N-acetylalanine. The span at 37 to 47 (SSSNGGESSSR) shows a compositional bias: low complexity. Phosphoserine is present on S53. N6-acetyllysine is present on K64. S77, S87, and S119 each carry phosphoserine. The tract at residues 134–178 (NIGRDTPTSAGPNSFNKGKHGFSDNQKLWERNIKSHLGNVHDQDN) is disordered. Position 139 is a phosphothreonine (T139). Residues 139–149 (TPTSAGPNSFN) show a composition bias toward polar residues. S147 carries the post-translational modification Phosphoserine. 2 positions are modified to N6-acetyllysine: K150 and K152. Basic and acidic residues predominate over residues 160–178 (KLWERNIKSHLGNVHDQDN).

In terms of assembly, interacts with UHRF2/NIRF. In terms of processing, ubiquitinated; mediated by UHRF2 and leading to its subsequent proteasomal degradation. N-terminally acetylated in a HYPK-dependent manner by the NatA acetyltransferase complex which is composed of NAA10 and NAA15.

It is found in the nucleus. Its function is as follows. May be involved in cell cycle regulation. The chain is PEST proteolytic signal-containing nuclear protein (PCNP) from Homo sapiens (Human).